We begin with the raw amino-acid sequence, 335 residues long: Ig gamma-2A chain C region secreted form (335 aa).

3 consecutive Ig-like domains span residues 6–98, 126–225, and 234–330; these read PSVY…KKIE, PSVF…KTIS, and PQVY…KTIS. The N-linked (GlcNAc...) asparagine glycan is linked to Asn-185.

It is found in the secreted. The polypeptide is Ig gamma-2A chain C region secreted form (Mus musculus (Mouse)).